The sequence spans 219 residues: Cyclin-U4-3 (219 aa).

The protein belongs to the cyclin family. Cyclin U/P subfamily. Interacts with CDKA-1. Expressed at low levels in roots, stems and flowers. Expressed in the shoot apex, leaf primordia and young leaves.

This Arabidopsis thaliana (Mouse-ear cress) protein is Cyclin-U4-3 (CYCU4-3).